A 474-amino-acid chain; its full sequence is Ribosomal protein uS12 methylthiotransferase RimO (474 aa).

Positions 37 to 147 (NRIGFVSLGC…VLNHVHKYVP (111 aa)) constitute an MTTase N-terminal domain. Residues cysteine 46, cysteine 82, cysteine 111, cysteine 179, cysteine 183, and cysteine 186 each contribute to the [4Fe-4S] cluster site. The region spanning 165–402 (LTPKHYAYLK…MEVQAEISAE (238 aa)) is the Radical SAM core domain. One can recognise a TRAM domain in the interval 405–471 (ARLVGRELDI…EHDLWAELVA (67 aa)).

This sequence belongs to the methylthiotransferase family. RimO subfamily. [4Fe-4S] cluster is required as a cofactor.

The protein localises to the cytoplasm. The catalysed reaction is L-aspartate(89)-[ribosomal protein uS12]-hydrogen + (sulfur carrier)-SH + AH2 + 2 S-adenosyl-L-methionine = 3-methylsulfanyl-L-aspartate(89)-[ribosomal protein uS12]-hydrogen + (sulfur carrier)-H + 5'-deoxyadenosine + L-methionine + A + S-adenosyl-L-homocysteine + 2 H(+). Catalyzes the methylthiolation of an aspartic acid residue of ribosomal protein uS12. This is Ribosomal protein uS12 methylthiotransferase RimO from Shewanella amazonensis (strain ATCC BAA-1098 / SB2B).